The following is a 122-amino-acid chain: Fluoride-specific ion channel FluC (122 aa).

4 consecutive transmembrane segments (helical) span residues 4 to 24 (LAVL…SIFI), 33 to 53 (LGTM…SIYL), 66 to 86 (LLIT…LEGI), and 95 to 115 (LKAF…VALG). The Na(+) site is built by glycine 73 and threonine 76.

It belongs to the fluoride channel Fluc/FEX (TC 1.A.43) family.

The protein resides in the cell inner membrane. It catalyses the reaction fluoride(in) = fluoride(out). With respect to regulation, na(+) is not transported, but it plays an essential structural role and its presence is essential for fluoride channel function. Functionally, fluoride-specific ion channel. Important for reducing fluoride concentration in the cell, thus reducing its toxicity. This is Fluoride-specific ion channel FluC from Hydrogenobaculum sp. (strain Y04AAS1).